The sequence spans 342 residues: SWR1-complex protein 5 (342 aa).

Disordered regions lie at residues 1–126 (MAPT…PVTI), 142–178 (PRTS…DPDS), and 214–238 (LGEN…RMPR). 2 stretches are compositionally biased toward acidic residues: residues 8–20 (LAED…DSDF) and 33–43 (ISDDDDEEAGE). Positions 78-87 (GEKRQKKTKT) are enriched in basic residues. In terms of domain architecture, BCNT-C spans 260 to 341 (NLSMASRLQA…RRARMAQAGK (82 aa)).

The protein belongs to the SWC5 family. In terms of assembly, component of the SWR1 chromatin remodeling complex.

It is found in the nucleus. Its function is as follows. Component of the SWR1 complex which mediates the ATP-dependent exchange of histone H2A for the H2A variant H2A.Z leading to transcriptional regulation of selected genes by chromatin remodeling. Involved in chromosome stability. The polypeptide is SWR1-complex protein 5 (crc-2) (Neurospora crassa (strain ATCC 24698 / 74-OR23-1A / CBS 708.71 / DSM 1257 / FGSC 987)).